We begin with the raw amino-acid sequence, 192 residues long: Thymidine kinase (192 aa).

ATP-binding positions include 9-16 (SAMNAGKS) and 87-90 (DECQ). Glu88 serves as the catalytic Proton acceptor. The Zn(2+) site is built by Cys145, Cys147, Cys182, and His185.

The protein belongs to the thymidine kinase family. As to quaternary structure, homotetramer.

The protein localises to the cytoplasm. The enzyme catalyses thymidine + ATP = dTMP + ADP + H(+). The chain is Thymidine kinase from Aliivibrio fischeri (strain ATCC 700601 / ES114) (Vibrio fischeri).